The chain runs to 276 residues: Hydroxyethylthiazole kinase (276 aa).

ATP is bound by residues Arg-126 and Ser-172. Position 199 (Gly-199) interacts with substrate.

The protein belongs to the Thz kinase family. It depends on Mg(2+) as a cofactor.

The catalysed reaction is 5-(2-hydroxyethyl)-4-methylthiazole + ATP = 4-methyl-5-(2-phosphooxyethyl)-thiazole + ADP + H(+). Its pathway is cofactor biosynthesis; thiamine diphosphate biosynthesis; 4-methyl-5-(2-phosphoethyl)-thiazole from 5-(2-hydroxyethyl)-4-methylthiazole: step 1/1. Catalyzes the phosphorylation of the hydroxyl group of 4-methyl-5-beta-hydroxyethylthiazole (THZ). The chain is Hydroxyethylthiazole kinase from Burkholderia pseudomallei (strain 1710b).